Here is a 759-residue protein sequence, read N- to C-terminus: Tripartite motif-containing protein 46 (759 aa).

A required for proximal axon localization, axon formation and migration region spans residues 1–166; it reads MAEGEDMQTF…VERYRQSVSV (166 aa). Residues 33 to 59 form an RING-type 1; degenerate zinc finger; the sequence is CPVCQEMYKQPLVLPCTHNVCQACARE. Residues 67–98 form a disordered region; the sequence is IGHGGDPSSEPTSPASTPSTRSPRLSRRTLPK. The segment covering 73 to 89 has biased composition (low complexity); sequence PSSEPTSPASTPSTRSP. The RING-type 2; degenerate zinc finger occupies 172-231; sequence CQLCKPPPLEATKGCSECRATFCNECFKLFHPWGTQKAQHEPTLPTLSFRPKGLMCPDHK. A B box-type zinc finger spans residues 222 to 263; the sequence is PKGLMCPDHKEEVTHYCKTCQRLVCQLCRVRRTHSGHKITPV. 4 residues coordinate Zn(2+): Cys-227, His-230, Cys-249, and His-255. Residues 294 to 400 are a coiled coil; that stretch reads ELEETIRHTE…RATEALQTFR (107 aa). Ser-330 carries the post-translational modification Phosphoserine. One can recognise a COS domain in the interval 370–427; that stretch reads LKETDQPCFVQAAKQLHNRIARATEALQTFRPAASSSFRHCQLDVGREMKLLTELNFL. The segment at 411–429 is required for microtubule association, proximal axon localization and axon formation; sequence QLDVGREMKLLTELNFLRV. The region spanning 429 to 528 is the Fibronectin type-III domain; the sequence is VPEAPVIDTQ…EDVHLHTPPA (100 aa). Residues 513–747 form the B30.2/SPRY domain; it reads GYGEYSEDVH…LQEPVGTKPE (235 aa). Ser-627 is subject to Phosphoserine.

This sequence belongs to the TRIM/RBCC family. Interacts with TUBB3 and TUBA4A. In terms of tissue distribution, expressed in primary hippocampal and cortical neurons.

Its subcellular location is the cell projection. The protein localises to the axon. The protein resides in the cytoplasm. It localises to the cytoskeleton. Microtubule-associated protein that is involved in the formation of parallel microtubule bundles linked by cross-bridges in the proximal axon. Required for the uniform orientation and maintenance of the parallel microtubule fascicles, which are important for efficient cargo delivery and trafficking in axons. Thereby also required for proper axon specification, the establishment of neuronal polarity and proper neuronal migration. The chain is Tripartite motif-containing protein 46 from Rattus norvegicus (Rat).